The sequence spans 424 residues: MKPLWQQYIQIINQVVKPALGCTEPIAAAYAAAVARTLLPVAPESIAVQVSDNLYKNSMGVYVPGTGKIGLAIAAAAGALAGNADAGLEVLANVTPEQVAQAQTLIDAGKVKVERTETDEFIYCCVSLTAGEQEAMVKICGGHTLIAEKRLNGELVFTADSAQAKATGSICDGVDINIESIYRFAQEVPFEEIQFILKASELNSKLSDEGMSKPYGLEVGRTMKNGIAAGIIGEDLLNKIVMLTAAASDARMGGANLPAMSNLGSGNQGIAATIPVVITAQCYKVSEEKLARALIMSHLGAIYIKSHYPPLSAFCGNTVTSAAASMAMVYLAGGSFEQSCFAIQNVISDSSGMVCDGAKASCAMKVSTSSSAAVRSFLMALNSQNVSGQGIIAKDVEKTIKNIGKMVLNGMSSTDVTIINIMSE.

It belongs to the UPF0597 family.

The polypeptide is UPF0597 protein Shewana3_2972 (Shewanella sp. (strain ANA-3)).